Consider the following 258-residue polypeptide: UPF0246 protein Sden_2729 (258 aa).

This sequence belongs to the UPF0246 family.

The polypeptide is UPF0246 protein Sden_2729 (Shewanella denitrificans (strain OS217 / ATCC BAA-1090 / DSM 15013)).